Here is a 246-residue protein sequence, read N- to C-terminus: Anionic trypsin-2 (246 aa).

An N-terminal signal peptide occupies residues M1–A15. Residues F16 to K23 constitute a propeptide, activation peptide. Positions I24–A244 constitute a Peptidase S1 domain. Cystine bridges form between C30–C160, C48–C64, C132–C233, C139–C206, C171–C185, and C196–C220. The active-site Charge relay system is the H63. Ca(2+)-binding residues include E75, N77, V80, and E85. Catalysis depends on D107, which acts as the Charge relay system. S200 serves as the catalytic Charge relay system.

Belongs to the peptidase S1 family. Ca(2+) serves as cofactor. In terms of tissue distribution, expressed in the pancreas, lung and kidney.

It localises to the secreted. Its subcellular location is the extracellular space. It carries out the reaction Preferential cleavage: Arg-|-Xaa, Lys-|-Xaa.. In Mus musculus (Mouse), this protein is Anionic trypsin-2 (Prss2).